The sequence spans 617 residues: Dihydroxy-acid dehydratase (617 aa).

Aspartate 81 provides a ligand contact to Mg(2+). Cysteine 122 serves as a coordination point for [2Fe-2S] cluster. Residues aspartate 123 and lysine 124 each contribute to the Mg(2+) site. Lysine 124 is subject to N6-carboxylysine. Cysteine 195 contributes to the [2Fe-2S] cluster binding site. A Mg(2+)-binding site is contributed by glutamate 490. The active-site Proton acceptor is serine 516.

It belongs to the IlvD/Edd family. In terms of assembly, homodimer. Requires [2Fe-2S] cluster as cofactor. Mg(2+) is required as a cofactor.

The catalysed reaction is (2R)-2,3-dihydroxy-3-methylbutanoate = 3-methyl-2-oxobutanoate + H2O. It carries out the reaction (2R,3R)-2,3-dihydroxy-3-methylpentanoate = (S)-3-methyl-2-oxopentanoate + H2O. It participates in amino-acid biosynthesis; L-isoleucine biosynthesis; L-isoleucine from 2-oxobutanoate: step 3/4. Its pathway is amino-acid biosynthesis; L-valine biosynthesis; L-valine from pyruvate: step 3/4. Functionally, functions in the biosynthesis of branched-chain amino acids. Catalyzes the dehydration of (2R,3R)-2,3-dihydroxy-3-methylpentanoate (2,3-dihydroxy-3-methylvalerate) into 2-oxo-3-methylpentanoate (2-oxo-3-methylvalerate) and of (2R)-2,3-dihydroxy-3-methylbutanoate (2,3-dihydroxyisovalerate) into 2-oxo-3-methylbutanoate (2-oxoisovalerate), the penultimate precursor to L-isoleucine and L-valine, respectively. The protein is Dihydroxy-acid dehydratase of Acidiphilium cryptum (strain JF-5).